Reading from the N-terminus, the 100-residue chain is Small ribosomal subunit protein uS14c (100 aa).

It belongs to the universal ribosomal protein uS14 family. In terms of assembly, part of the 30S ribosomal subunit.

Its subcellular location is the plastid. The protein resides in the chloroplast. Its function is as follows. Binds 16S rRNA, required for the assembly of 30S particles. The polypeptide is Small ribosomal subunit protein uS14c (Oltmannsiellopsis viridis (Marine flagellate)).